The sequence spans 139 residues: Small ribosomal subunit protein uS11 (139 aa).

Over residues 1 to 13 the composition is skewed to low complexity; sequence MAKQAAKGSAAAT. The interval 1–30 is disordered; that stretch reads MAKQAAKGSAAATKRQRGKRREKKNVPRGQ. The segment covering 14-23 has biased composition (basic residues); it reads KRQRGKRREK.

This sequence belongs to the universal ribosomal protein uS11 family. In terms of assembly, part of the 30S ribosomal subunit. Interacts with proteins S7 and S18. Binds to IF-3.

Located on the platform of the 30S subunit, it bridges several disparate RNA helices of the 16S rRNA. Forms part of the Shine-Dalgarno cleft in the 70S ribosome. This is Small ribosomal subunit protein uS11 from Roseiflexus sp. (strain RS-1).